Here is a 404-residue protein sequence, read N- to C-terminus: WD repeat and SOCS box-containing protein 2 (404 aa).

7 WD repeats span residues 16-55 (GRPHQFDWKSSCETWSVAFSPDGSWFAWSQGHCIVKLIPW), 81-140 (GSPK…IWEV), 144-183 (LLLLNLSGHQDVVRDLSFTPSGSLILVSASRDKTLRIWDL), 188-226 (KQIQVLSGHLQWVYCCSISPDCSMLCSAAGEKSVFLWSM), 230-268 (TLIRKLEGHQSSVVSCDFSPDSALLVTASYDTNVIMWDP), 283-322 (DPAMDDSDVHISSLRSVCFSPEGLYLATVADDRLLRIWAL), and 325-362 (KTPIAFAPMTNGLCCTFFPHGGVIATGTRDGHVQFWTA). The segment at 68-87 (AKSRSSKNETKGRGSPKEKT) is disordered. An SOCS box domain is found at 356-404 (HVQFWTAPRVLSSLKHLCRKALRSFLTTYQVLALPIPKKMKEFLTYRTF).

Its pathway is protein modification; protein ubiquitination. Functionally, may be a substrate-recognition component of a SCF-like ECS (Elongin-Cullin-SOCS-box protein) E3 ubiquitin ligase complex which mediates the ubiquitination and subsequent proteasomal degradation of target proteins. This Homo sapiens (Human) protein is WD repeat and SOCS box-containing protein 2 (WSB2).